The sequence spans 394 residues: Ribulose bisphosphate carboxylase large chain (394 aa).

Lysine 5 is subject to N6,N6,N6-trimethyllysine. Residues asparagine 114 and threonine 164 each coordinate substrate. Lysine 166 (proton acceptor) is an active-site residue. Residue lysine 168 participates in substrate binding. Lysine 192, aspartate 194, and glutamate 195 together coordinate Mg(2+). Lysine 192 carries the N6-carboxylysine modification. The active-site Proton acceptor is the histidine 285. Substrate-binding residues include arginine 286, histidine 318, and serine 370.

The protein belongs to the RuBisCO large chain family. Type I subfamily. Heterohexadecamer of 8 large chains and 8 small chains; disulfide-linked. The disulfide link is formed within the large subunit homodimers. Mg(2+) is required as a cofactor. In terms of processing, the disulfide bond which can form in the large chain dimeric partners within the hexadecamer appears to be associated with oxidative stress and protein turnover.

Its subcellular location is the plastid. The protein localises to the chloroplast. The enzyme catalyses 2 (2R)-3-phosphoglycerate + 2 H(+) = D-ribulose 1,5-bisphosphate + CO2 + H2O. The catalysed reaction is D-ribulose 1,5-bisphosphate + O2 = 2-phosphoglycolate + (2R)-3-phosphoglycerate + 2 H(+). RuBisCO catalyzes two reactions: the carboxylation of D-ribulose 1,5-bisphosphate, the primary event in carbon dioxide fixation, as well as the oxidative fragmentation of the pentose substrate in the photorespiration process. Both reactions occur simultaneously and in competition at the same active site. In Alisma plantago-aquatica (Common water-plantain), this protein is Ribulose bisphosphate carboxylase large chain (rbcL).